Consider the following 460-residue polypeptide: Ammonium transporter Rh type B-B (460 aa).

At 1–10 the chain is on the cytoplasmic side; it reads MTSYSTNMRI. A helical transmembrane segment spans residues 11-31; it reads KLPLFCLLLQFITIILFAVFV. Residues 32 to 62 lie on the Extracellular side of the membrane; it reads RYDHESDARGWHEELNNHSSSNADNDFYYRY. Asn48 carries an N-linked (GlcNAc...) asparagine glycan. The helical transmembrane segment at 63 to 83 threads the bilayer; the sequence is PSFQDVHVMIFIGFGFLMTFL. Residues 84–87 lie on the Cytoplasmic side of the membrane; that stretch reads KRYG. The chain crosses the membrane as a helical span at residues 88 to 108; it reads FSSVAFNFLIAAFGLQWSTLI. At 109–125 the chain is on the extracellular side; the sequence is QGFFHGFHDGKIHVGIE. A helical membrane pass occupies residues 126–146; it reads SMINADFCTGAVLISFGAVLG. The Cytoplasmic segment spans residues 147–150; the sequence is KTSP. Residues 151 to 171 form a helical membrane-spanning segment; the sequence is VQLIIMTLVEVTLFGINEYII. At 172–179 the chain is on the extracellular side; the sequence is LNIVGAKD. A helical membrane pass occupies residues 180–202; sequence AGGSMTIHTFGAYFGLIVSRVLY. Topologically, residues 203–220 are cytoplasmic; the sequence is REDLEKSRQREGSVYHSD. A helical membrane pass occupies residues 221–241; sequence LFAMIGTIYLWMFWPSFNSAV. Residues 242–252 lie on the Extracellular side of the membrane; the sequence is TAHGDDQHRTV. The chain crosses the membrane as a helical span at residues 253–273; the sequence is MNTYYSLAACTLATFGFSALL. At 274–283 the chain is on the cytoplasmic side; it reads NGEGKLDMVH. Residues 284–304 form a helical membrane-spanning segment; it reads IQNAALAGGVAVGTSGEMMLT. A topological domain (extracellular) is located at residue Pro305. The helical transmembrane segment at 306-326 threads the bilayer; it reads FGAMIAGTLAGMISVLGYKYL. Over 327–347 the chain is Cytoplasmic; it reads TPVLDSKLKIQDTCGVHNLHG. Residues 348–368 form a helical membrane-spanning segment; the sequence is MPGILGAIIGAIVALFATADI. Topologically, residues 369-394 are extracellular; sequence YGDGMGDVFPLISDGSRTAKQQSLYQ. The helical transmembrane segment at 395 to 415 threads the bilayer; the sequence is FLALLVALGFAIIGGTVVGFI. The Cytoplasmic portion of the chain corresponds to 416–460; it reads LKLPIFGTPSDAECFEDAIYWEVPGGEGHQQLTVVINNEDPDTQA.

This sequence belongs to the ammonium transporter (TC 2.A.49) family. Rh subfamily.

The protein localises to the basolateral cell membrane. It localises to the cytoplasmic vesicle membrane. Its function is as follows. Functions as a specific ammonium transporter. This Xenopus laevis (African clawed frog) protein is Ammonium transporter Rh type B-B (rhbg-b).